The chain runs to 145 residues: Small ribosomal subunit protein bS6 (145 aa).

It belongs to the bacterial ribosomal protein bS6 family.

In terms of biological role, binds together with bS18 to 16S ribosomal RNA. The polypeptide is Small ribosomal subunit protein bS6 (Mycoplasmopsis agalactiae (strain NCTC 10123 / CIP 59.7 / PG2) (Mycoplasma agalactiae)).